A 118-amino-acid chain; its full sequence is Holo-[acyl-carrier-protein] synthase (118 aa).

The Mg(2+) site is built by aspartate 8 and glutamate 58.

It belongs to the P-Pant transferase superfamily. AcpS family. Mg(2+) serves as cofactor.

It localises to the cytoplasm. The catalysed reaction is apo-[ACP] + CoA = holo-[ACP] + adenosine 3',5'-bisphosphate + H(+). In terms of biological role, transfers the 4'-phosphopantetheine moiety from coenzyme A to a Ser of acyl-carrier-protein. The polypeptide is Holo-[acyl-carrier-protein] synthase (Streptococcus pyogenes serotype M12 (strain MGAS2096)).